The sequence spans 200 residues: Phosphatidylethanolamine N-methyltransferase B (200 aa).

Residues 1–8 (MEKGLSSD) lie on the Lumenal side of the membrane. The segment at residues 9–29 (LIIAFVAIVLHVVNYNVTAQF) is an intramembrane region (helical). At 30 to 39 (EYKTRYFTKL) the chain is on the lumenal side. A helical transmembrane segment spans residues 40–58 (IGRNAIYYYAVFLIISALI). Topologically, residues 59-86 (RDHFINVAVLSDKDSIILFPTEIANMIG) are cytoplasmic. The chain crosses the membrane as a helical span at residues 87 to 107 (DSCFIFGILLNIWTLKALGIK). 91–93 (IFG) provides a ligand contact to S-adenosyl-L-methionine. Topologically, residues 108 to 150 (GMYNGDSFGHIMDSPVTGGPYQFFSDPQYVGTTIAALGVAIRN) are lumenal. A helical membrane pass occupies residues 151-171 (QSIYGFLCTILVGVVFYISAT). Over 172–200 (FVETPHLKNIYSNRSYSKINFKNLKSLKN) the chain is Cytoplasmic. Residue 174 to 175 (ET) participates in S-adenosyl-L-methionine binding.

It belongs to the class VI-like SAM-binding methyltransferase superfamily. PEMT/PEM2 methyltransferase family.

Its subcellular location is the endoplasmic reticulum membrane. The protein resides in the mitochondrion membrane. It carries out the reaction a 1,2-diacyl-sn-glycero-3-phospho-N-methylethanolamine + S-adenosyl-L-methionine = a 1,2-diacyl-sn-glycero-3-phospho-N,N-dimethylethanolamine + S-adenosyl-L-homocysteine + H(+). The enzyme catalyses a 1,2-diacyl-sn-glycero-3-phospho-N,N-dimethylethanolamine + S-adenosyl-L-methionine = a 1,2-diacyl-sn-glycero-3-phosphocholine + S-adenosyl-L-homocysteine + H(+). It catalyses the reaction a 1,2-diacyl-sn-glycero-3-phosphoethanolamine + S-adenosyl-L-methionine = a 1,2-diacyl-sn-glycero-3-phospho-N-methylethanolamine + S-adenosyl-L-homocysteine + H(+). Its pathway is phospholipid metabolism; phosphatidylcholine biosynthesis. Catalyzes the three sequential steps of the methylation pathway of phosphatidylcholine biosynthesis, the SAM-dependent methylation of phosphatidylethanolamine (PE) to phosphatidylmonomethylethanolamine (PMME), PMME to phosphatidyldimethylethanolamine (PDME), and PDME to phosphatidylcholine (PC). This Dictyostelium discoideum (Social amoeba) protein is Phosphatidylethanolamine N-methyltransferase B (pemtB).